A 253-amino-acid chain; its full sequence is Complement C1q subcomponent subunit B (253 aa).

Residues 1-27 (MMMKIPWGSIPVLMLLLLLGLIDISQA) form the signal peptide. Glutamine 28 carries the pyrrolidone carboxylic acid modification. 5 positions are modified to 4-hydroxyproline: proline 35, proline 38, proline 41, proline 53, and proline 56. 2 Collagen-like domains span residues 37–86 (IPGI…PGNP) and 60–114 (GEKG…GESG). The tract at residues 38–115 (PGIPGIPGTP…APGPKGESGD (78 aa)) is disordered. 5-hydroxylysine occurs at positions 59 and 62. Proline 65 carries the 4-hydroxyproline modification. A compositionally biased stretch (basic and acidic residues) spans 70 to 79 (DHGEFGEKGD). Lysine 77 bears the 5-hydroxylysine mark. The segment covering 80–92 (PGIPGNPGKVGPK) has biased composition (low complexity). Proline 83 and proline 86 each carry 4-hydroxyproline. A 5-hydroxylysine mark is found at lysine 92 and lysine 98. Gly residues predominate over residues 96-105 (GPKGGPGAPG). A 4-hydroxyproline mark is found at proline 101, proline 104, and proline 107. Lysine 110 is modified (5-hydroxylysine). The 137-residue stretch at 117-253 (KATQKIAFSA…GFLLFPDMEA (137 aa)) folds into the C1q domain. A disulfide bond links cysteine 181 and cysteine 198. Ca(2+)-binding residues include aspartate 199, tyrosine 200, and glutamine 206.

In terms of assembly, core component of the complement C1 complex, a calcium-dependent complex composed of 1 molecule of the C1Q subcomplex, 2 molecules of C1R and 2 molecules of C1S. The C1Q subcomplex is composed 18 subunits: 3 chains of C1QA, C1QB, and C1QC trimerize to form 6 collagen-like triple helices connected to six globular ligand-recognition modules (C1q domain). Post-translationally, hydroxylated on lysine and proline residues. Hydroxylated lysine residues can be glycosylated. Human C1Q contains up to 68.3 hydroxylysine-galactosylglucose residues and up to 2.5 hydroxylysine-galactose per molecule. Total percentage hydroxylysine residues glycosylated is 86.4%.

Its subcellular location is the secreted. The protein localises to the cell surface. The C1Q subcomplex is inhibited by sulfated molecules, such as triterpenoid sulfates, heparan sulfate, or chondroitin sulfates. Functionally, core component of the complement C1 complex, a multiprotein complex that initiates the classical pathway of the complement system, a cascade of proteins that leads to phagocytosis and breakdown of pathogens and signaling that strengthens the adaptive immune system. The classical complement pathway is initiated by the C1Q subcomplex of the C1 complex, which specifically binds IgG or IgM immunoglobulins complexed with antigens, forming antigen-antibody complexes on the surface of pathogens: C1QA, together with C1QB and C1QC, specifically recognizes and binds the Fc regions of IgG or IgM via its C1q domain. Immunoglobulin-binding activates the proenzyme C1R, which cleaves C1S, initiating the proteolytic cascade of the complement system. The C1Q subcomplex is activated by a hexamer of IgG complexed with antigens, while it is activated by a pentameric IgM. The C1Q subcomplex also recognizes and binds phosphatidylserine exposed on the surface of cells undergoing programmed cell death, possibly promoting activation of the complement system. The protein is Complement C1q subcomponent subunit B of Homo sapiens (Human).